The sequence spans 197 residues: Ras-like protein rasB (197 aa).

Gly13–Ser20 lines the GTP pocket. Residues Tyr35–Tyr43 carry the Effector region motif. GTP-binding positions include Asp60–Gln64 and Asn119–Asp122. Cys194 is subject to Cysteine methyl ester. Cys194 carries S-geranylgeranyl cysteine lipidation. Residues Leu195–Leu197 constitute a propeptide, removed in mature form.

Belongs to the small GTPase superfamily. Ras family.

The protein resides in the cell membrane. The catalysed reaction is GTP + H2O = GDP + phosphate + H(+). Alternates between an inactive form bound to GDP and an active form bound to GTP. Activated by a guanine nucleotide-exchange factor (GEF) and inactivated by a GTPase-activating protein (GAP). Ras proteins bind GDP/GTP and possess intrinsic GTPase activity. This Dictyostelium discoideum (Social amoeba) protein is Ras-like protein rasB (rasB).